The following is a 424-amino-acid chain: Glutamyl-tRNA reductase (424 aa).

Residues 50-53 (TCNR), S98, 103-105 (EDQ), and Q109 each bind substrate. C51 serves as the catalytic Nucleophile. Residue 178-183 (GSGEMG) coordinates NADP(+).

Belongs to the glutamyl-tRNA reductase family. In terms of assembly, homodimer.

The catalysed reaction is (S)-4-amino-5-oxopentanoate + tRNA(Glu) + NADP(+) = L-glutamyl-tRNA(Glu) + NADPH + H(+). The protein operates within porphyrin-containing compound metabolism; protoporphyrin-IX biosynthesis; 5-aminolevulinate from L-glutamyl-tRNA(Glu): step 1/2. Its function is as follows. Catalyzes the NADPH-dependent reduction of glutamyl-tRNA(Glu) to glutamate 1-semialdehyde (GSA). This chain is Glutamyl-tRNA reductase, found in Methanoregula boonei (strain DSM 21154 / JCM 14090 / 6A8).